The following is a 467-amino-acid chain: Probable Xaa-Pro aminopeptidase SMAC_04549 (467 aa).

Residues Asp263, Asp274, Glu397, and Glu437 each contribute to the Mn(2+) site.

Belongs to the peptidase M24B family. Mn(2+) serves as cofactor.

The catalysed reaction is Release of any N-terminal amino acid, including proline, that is linked to proline, even from a dipeptide or tripeptide.. Functionally, catalyzes the removal of a penultimate prolyl residue from the N-termini of peptides. In Sordaria macrospora (strain ATCC MYA-333 / DSM 997 / K(L3346) / K-hell), this protein is Probable Xaa-Pro aminopeptidase SMAC_04549.